Here is an 89-residue protein sequence, read N- to C-terminus: Abortive infection protein (89 aa).

The protein localises to the cell membrane. Its function is as follows. ABI may interact with a target in the cell membrane, which could be the product of the host's cmrA gene, and cause disruption of the cellular membrane such that lysis of the infected cell and death of the infecting phage would result. This Escherichia coli protein is Abortive infection protein (abi).